A 970-amino-acid polypeptide reads, in one-letter code: Anaphase-promoting complex subunit 3 (970 aa).

4 TPR repeats span residues Glu35–Lys68, Ala74–Asn107, Asn142–Ser175, and Gly185–Leu218. The interval Asn106–Asn149 is disordered. Residues Lys274 to Glu300 are disordered. 2 TPR repeats span residues Ile319–Asn353 and Thr361–Thr394. 3 disordered regions span residues Ile358–Gln379, Pro414–Thr525, and Ser556–Ser582. Positions Gln359 to Gln379 are enriched in low complexity. Polar residues predominate over residues Ser424–Thr443. Positions Val446–Ser460 are enriched in basic residues. The span at Thr500–Thr525 shows a compositional bias: low complexity. TPR repeat units follow at residues Thr546–Asn580, Leu636–Thr671, Gly672–Arg705, Pro740–Met773, Tyr775–His807, Tyr808–Ser841, Val843–Asn876, Phe878–Glu910, and Thr911–Asn944. Residues Tyr570 to Asn580 are compositionally biased toward basic residues.

This sequence belongs to the APC3/CDC27 family. As to quaternary structure, the APC/C is composed of at least 13 subunits that stay tightly associated throughout the cell cycle: anapc1, anapc2, anapc3, anapc4, anapc5, anapc6, anapc7, anapc8, anapc10, anapc11, cdc20, cdc26 and cdh1.

It is found in the nucleus. Its pathway is protein modification; protein ubiquitination. Functionally, component of the anaphase promoting complex/cyclosome (APC/C), a cell cycle-regulated E3 ubiquitin-protein ligase complex that controls progression through mitosis and the G1 phase of the cell cycle. The protein is Anaphase-promoting complex subunit 3 (anapc3) of Dictyostelium discoideum (Social amoeba).